Consider the following 205-residue polypeptide: Small ribosomal subunit protein uS4 (205 aa).

The 62-residue stretch at 95–156 folds into the S4 RNA-binding domain; the sequence is SRLDNIVYRM…KTIKIPIVKA (62 aa).

It belongs to the universal ribosomal protein uS4 family. In terms of assembly, part of the 30S ribosomal subunit. Contacts protein S5. The interaction surface between S4 and S5 is involved in control of translational fidelity.

Functionally, one of the primary rRNA binding proteins, it binds directly to 16S rRNA where it nucleates assembly of the body of the 30S subunit. Its function is as follows. With S5 and S12 plays an important role in translational accuracy. The polypeptide is Small ribosomal subunit protein uS4 (Mycoplasma pneumoniae (strain ATCC 29342 / M129 / Subtype 1) (Mycoplasmoides pneumoniae)).